Reading from the N-terminus, the 213-residue chain is Uracil phosphoribosyltransferase (213 aa).

5-phospho-alpha-D-ribose 1-diphosphate contacts are provided by residues arginine 78, arginine 103, and 130–138 (DPMLATGGT). Residues isoleucine 197 and 202–204 (GDA) each bind uracil. Aspartate 203 contributes to the 5-phospho-alpha-D-ribose 1-diphosphate binding site.

The protein belongs to the UPRTase family. Requires Mg(2+) as cofactor.

The enzyme catalyses UMP + diphosphate = 5-phospho-alpha-D-ribose 1-diphosphate + uracil. It functions in the pathway pyrimidine metabolism; UMP biosynthesis via salvage pathway; UMP from uracil: step 1/1. Allosterically activated by GTP. Functionally, catalyzes the conversion of uracil and 5-phospho-alpha-D-ribose 1-diphosphate (PRPP) to UMP and diphosphate. This chain is Uracil phosphoribosyltransferase, found in Nocardioides sp. (strain ATCC BAA-499 / JS614).